The chain runs to 57 residues: Thiocillin GE37468 (57 aa).

A propeptide spans 1-42 (MGNNEEYFIDVNDLSIDVFDVVEQGGAVTALTADHGMPEVGA) (removed in mature form). The 5-methyloxazole-4-carboxylic acid (Ser-Thr) cross-link spans 43–44 (ST). The segment at residues 43–52 (STNCFCYICC) is a cross-link (pyridine-2,5-dicarboxylic acid (Ser-Cys) (with S-53)). A cross-link (pyridine-2,5-dicarboxylic acid (Ser-Ser) (with C-52)) is located at residues 43 to 53 (STNCFCYICCS). A cross-link (thiazole-4-carboxylic acid (Asn-Cys)) is located at residues 45-46 (NC). A cross-link (thiazoline-4-carboxylic acid (Phe-Cys)) is located at residues 47–48 (FC). The residue at position 50 (isoleucine 50) is a 5-hydroxy-3-methylproline (Ile). The segment at residues 50 to 51 (IC) is a cross-link (thiazole-4-carboxylic acid (Ile-Cys)). Residues 51–52 (CC) constitute a cross-link (thiazole-4-carboxylic acid (Cys-Cys)). Positions 53 to 54 (SC) form a cross-link, thiazole-4-carboxylic acid (Ser-Cys). 2 positions are modified to 2,3-didehydroalanine (Ser): serine 55 and serine 56. Residue asparagine 57 is a propeptide, removed in mature form.

In terms of processing, maturation of thiazole and oxazole containing antibiotics involves the enzymatic condensation of a Cys, Ser or Thr with the alpha-carbonyl of the preceding amino acid to form a thioether or ether bond, then dehydration to form a double bond with the alpha-amino nitrogen. Thiazoline or oxazoline ring are dehydrogenated to form thiazole or oxazole rings. Post-translationally, maturation of pyridinyl containing antibiotics involves the cross-linking of a Ser and a Cys-Ser pair usually separated by 7 or 8 residues along the peptide chain. The Ser residues are dehydrated to didehydroalanines, then bonded between their beta carbons. The alpha carbonyl of the Cys condenses with alpha carbon of the first Ser to form a pyridinyl ring. The ring may be multiply dehydrogenated to form a pyridine ring with loss of the amino nitrogen of the first Ser.

The protein resides in the secreted. In terms of biological role, has bacteriocidal activity against both aerobic and anaerobic Gram-positive bacteria. Inhibits growth of B.subtilis (MIC=0.047 ug/ml) and methicillin-resistant S.aureus (MRSA) (MIC=0.047 ug/ml). Has poor activity against Gram-negative bacteria, with the exception of B.fragilis. Inhibits bacterial protein biosynthesis by acting on elongation factor Tu (EF-Tu). Full antibiotic activity depends on the presence of the modified residue Ile-50. The protein is Thiocillin GE37468 (getA) of Streptomyces sp.